The chain runs to 131 residues: NADPH-dependent 7-cyano-7-deazaguanine reductase (131 aa).

The active-site Thioimide intermediate is the C47. Catalysis depends on D54, which acts as the Proton donor. Residues 69–71 (MEL) and 88–89 (HE) contribute to the substrate site.

It belongs to the GTP cyclohydrolase I family. QueF type 1 subfamily.

It is found in the cytoplasm. It catalyses the reaction 7-aminomethyl-7-carbaguanine + 2 NADP(+) = 7-cyano-7-deazaguanine + 2 NADPH + 3 H(+). It participates in tRNA modification; tRNA-queuosine biosynthesis. Catalyzes the NADPH-dependent reduction of 7-cyano-7-deazaguanine (preQ0) to 7-aminomethyl-7-deazaguanine (preQ1). The polypeptide is NADPH-dependent 7-cyano-7-deazaguanine reductase (Microcystis aeruginosa (strain NIES-843 / IAM M-2473)).